The chain runs to 360 residues: Pyrimidine monooxygenase RutA (360 aa).

FMN contacts are provided by residues 49–50, asparagine 115, glutamate 124, 140–141, and serine 190; these read IK and RY.

The protein belongs to the NtaA/SnaA/DszA monooxygenase family. RutA subfamily.

The catalysed reaction is uracil + FMNH2 + NADH + O2 = (Z)-3-ureidoacrylate + FMN + NAD(+) + H2O + H(+). It catalyses the reaction thymine + FMNH2 + NADH + O2 = (Z)-2-methylureidoacrylate + FMN + NAD(+) + H2O + H(+). Functionally, catalyzes the pyrimidine ring opening between N-3 and C-4 by an unusual flavin hydroperoxide-catalyzed mechanism, adding oxygen atoms in the process to yield ureidoacrylate peracid, that immediately reacts with FMN forming ureidoacrylate and FMN-N(5)-oxide. The FMN-N(5)-oxide reacts spontaneously with NADH to produce FMN. Requires the flavin reductase RutF to regenerate FMN in vivo. This is Pyrimidine monooxygenase RutA from Stutzerimonas stutzeri (strain A1501) (Pseudomonas stutzeri).